Here is a 187-residue protein sequence, read N- to C-terminus: Large ribosomal subunit protein uL22A (187 aa).

The protein belongs to the universal ribosomal protein uL22 family. Component of the large ribosomal subunit (LSU). Mature yeast ribosomes consist of a small (40S) and a large (60S) subunit. The 40S small subunit contains 1 molecule of ribosomal RNA (18S rRNA) and at least 33 different proteins. The large 60S subunit contains 3 rRNA molecules (25S, 5.8S and 5S rRNA) and at least 46 different proteins. uL22 is associated with the polypeptide exit tunnel.

It is found in the cytoplasm. In terms of biological role, component of the ribosome, a large ribonucleoprotein complex responsible for the synthesis of proteins in the cell. The small ribosomal subunit (SSU) binds messenger RNAs (mRNAs) and translates the encoded message by selecting cognate aminoacyl-transfer RNA (tRNA) molecules. The large subunit (LSU) contains the ribosomal catalytic site termed the peptidyl transferase center (PTC), which catalyzes the formation of peptide bonds, thereby polymerizing the amino acids delivered by tRNAs into a polypeptide chain. The nascent polypeptides leave the ribosome through a tunnel in the LSU and interact with protein factors that function in enzymatic processing, targeting, and the membrane insertion of nascent chains at the exit of the ribosomal tunnel. The chain is Large ribosomal subunit protein uL22A (rpl1701) from Schizosaccharomyces pombe (strain 972 / ATCC 24843) (Fission yeast).